The following is an 801-amino-acid chain: Interleukin-4 receptor subunit alpha (801 aa).

Residues 1-25 (MGWLCTKFLSSVSCLILLWVTGSGG) form the signal peptide. Over 26–232 (IKVLGDPTCF…NHFQLPLLQR (207 aa)) the chain is Extracellular. Cys34 and Cys44 are disulfide-bonded. N-linked (GlcNAc...) asparagine glycosylation is present at Asn71. A disulfide bridge connects residues Cys74 and Cys86. The 99-residue stretch at 125–223 (APDNLTLHTN…EWSPSITWYN (99 aa)) folds into the Fibronectin type-III domain. Asn128, Asn134, and Asn162 each carry an N-linked (GlcNAc...) asparagine glycan. A Phosphoserine modification is found at Ser164. N-linked (GlcNAc...) asparagine glycosylation is present at Asn176. The short motif at 212–216 (WSEWS) is the WSXWS motif element. Residues 233-256 (LPLGVSISCICILLFCLTCYFSII) traverse the membrane as a helical segment. Topologically, residues 257–801 (KIKKIWWDQI…PVGTLGVTVS (545 aa)) are cytoplasmic. Positions 262 to 270 (WWDQIPTPA) match the Box 1 motif motif. Residues 424–476 (VGQSSMAESSSLLPSESGQASTSWACFPTGPSETTCQVTGQQPPHPDPERATG) are disordered. Residues 426 to 444 (QSSMAESSSLLPSESGQAS) are compositionally biased toward low complexity. Positions 439 to 549 (ESGQASTSWA…ESWEQILHMS (111 aa)) are required for IRS1 activation and IL4-induced cell growth. Residues 454–465 (PSETTCQVTGQQ) show a composition bias toward polar residues. At Tyr492 the chain carries Phosphotyrosine. A disordered region spans residues 493 to 515 (RSFSDFSSPAPNPGELASEQKQA). Positions 549–644 (SVLQHGTAGS…NSMPLFTFGL (96 aa)) are required for IL4-induced gene expression. A phosphotyrosine mark is found at Tyr566, Tyr594, and Tyr622. The ITIM motif signature appears at 698–703 (IVYSSL). Residues 767–801 (RTPSNLSGVGKGPGHSPVPSQTTEVPVGTLGVTVS) are disordered.

The protein belongs to the type I cytokine receptor family. Type 4 subfamily. As to quaternary structure, the functional IL4 receptor is formed by initial binding of IL4 to IL4R. Subsequent recruitment to the complex of the common gamma chain, in immune cells, creates a type I receptor and, in non-immune cells, of IL13RA1 forms a type II receptor. IL4R can also interact with the IL13/IL13RA1 complex to form a similar type II receptor. Interacts with PIK3C3. Interacts with the SH2-containing phosphatases, PTPN6/SHIP1, PTPN11/SHIP2 and INPP5D/SHIP. Interacts with JAK1 through a Box 1-containing region; inhibited by SOCS5. Interacts with SOCS5; inhibits IL4 signaling. Interacts with JAK3. Interacts with CLM1. Interacts with IL13RA2. Post-translationally, on IL4 binding, phosphorylated on C-terminal tyrosine residues. As to expression, isoform 2 is expressed in kidney, spleen, lung and liver.

It is found in the cell membrane. It localises to the secreted. Functionally, receptor for both interleukin 4 and interleukin 13. Couples to the JAK1/2/3-STAT6 pathway. The IL4 response is involved in promoting Th2 differentiation. The IL4/IL13 responses are involved in regulating IgE production and, chemokine and mucus production at sites of allergic inflammation. In certain cell types, can signal through activation of insulin receptor substrates, IRS1/IRS2. Its function is as follows. Isoform 2 (soluble form) inhibits IL4-induced spleen cell proliferation. This chain is Interleukin-4 receptor subunit alpha (Il4r), found in Rattus norvegicus (Rat).